Reading from the N-terminus, the 511-residue chain is Lysine--tRNA ligase (511 aa).

Residues E422 and E429 each coordinate Mg(2+).

It belongs to the class-II aminoacyl-tRNA synthetase family. Homodimer. The cofactor is Mg(2+).

The protein resides in the cytoplasm. The enzyme catalyses tRNA(Lys) + L-lysine + ATP = L-lysyl-tRNA(Lys) + AMP + diphosphate. The protein is Lysine--tRNA ligase of Chlorobaculum tepidum (strain ATCC 49652 / DSM 12025 / NBRC 103806 / TLS) (Chlorobium tepidum).